A 605-amino-acid polypeptide reads, in one-letter code: Elongation factor 4 (605 aa).

The tr-type G domain maps to 9 to 191 (DTIRNFCIIA…AIIKRVPAPV (183 aa)). GTP is bound by residues 21–26 (DHGKST) and 138–141 (NKID).

This sequence belongs to the TRAFAC class translation factor GTPase superfamily. Classic translation factor GTPase family. LepA subfamily.

The protein localises to the cell inner membrane. The enzyme catalyses GTP + H2O = GDP + phosphate + H(+). Its function is as follows. Required for accurate and efficient protein synthesis under certain stress conditions. May act as a fidelity factor of the translation reaction, by catalyzing a one-codon backward translocation of tRNAs on improperly translocated ribosomes. Back-translocation proceeds from a post-translocation (POST) complex to a pre-translocation (PRE) complex, thus giving elongation factor G a second chance to translocate the tRNAs correctly. Binds to ribosomes in a GTP-dependent manner. The chain is Elongation factor 4 from Chlorobium phaeobacteroides (strain BS1).